We begin with the raw amino-acid sequence, 319 residues long: Inactive hydroxysteroid dehydrogenase-like protein 1 (319 aa).

The segment at 2-82 (AAVDSFQLLY…CGASEAIAKA (81 aa)) is required for mitochondria translocation. NADP(+) contacts are provided by residues 74–80 (GASEAIA), Lys-99, and Asp-125.

This sequence belongs to the short-chain dehydrogenases/reductases (SDR) family. 17-beta-HSD 3 subfamily.

The protein resides in the mitochondrion. The sequence is that of Inactive hydroxysteroid dehydrogenase-like protein 1 (hsdl1) from Danio rerio (Zebrafish).